The primary structure comprises 305 residues: Acetaldehyde dehydrogenase (305 aa).

Cys130 acts as the Acyl-thioester intermediate in catalysis. NAD(+) is bound by residues 161 to 169 (SVGPGTRKN) and Asn272.

It belongs to the acetaldehyde dehydrogenase family.

It catalyses the reaction acetaldehyde + NAD(+) + CoA = acetyl-CoA + NADH + H(+). The sequence is that of Acetaldehyde dehydrogenase from Leptothrix cholodnii (strain ATCC 51168 / LMG 8142 / SP-6) (Leptothrix discophora (strain SP-6)).